The primary structure comprises 181 residues: Inner kinetochore subunit MCM16 (181 aa).

Residues 112 to 171 (KQLIESRAERDELMSKLIELSSKFPKPTIPPDDSDTAGKQVEVEKENETIQELMIALQIH) are a coiled coil.

It belongs to the CENP-H/MCM16 family. As to quaternary structure, component of the heterotrimeric kinetochore subcomplex CTF3, which consists of CTF3, MCM16 and MCM22. The CTF3 subcomplex is part of a larger constitutive centromere-associated network (CCAN) (also known as central kinetochore CTF19 complex in yeast), which is composed of at least AME1, CHL4, CNN1, CTF3, CTF19, IML3, MCM16, MCM21, MCM22, MHF1, MHF2, MIF2, NKP1, NKP2, OKP1 and WIP1. Interacts with CTF19.

It localises to the nucleus. The protein localises to the chromosome. Its subcellular location is the centromere. The protein resides in the kinetochore. Functionally, component of the kinetochore, a multiprotein complex that assembles on centromeric DNA and attaches chromosomes to spindle microtubules, mediating chromosome segregation and sister chromatid segregation during meiosis and mitosis. Component of the inner kinetochore constitutive centromere-associated network (CCAN), which serves as a structural platform for outer kinetochore assembly. The chain is Inner kinetochore subunit MCM16 (MCM16) from Saccharomyces cerevisiae (strain ATCC 204508 / S288c) (Baker's yeast).